Consider the following 106-residue polypeptide: Large ribosomal subunit protein uL24 (106 aa).

The tract at residues 69–106 (SNLNPVDPKTGKATRVGRKVSSEGTLVRYSKKSGEEIK) is disordered.

It belongs to the universal ribosomal protein uL24 family. As to quaternary structure, part of the 50S ribosomal subunit.

One of two assembly initiator proteins, it binds directly to the 5'-end of the 23S rRNA, where it nucleates assembly of the 50S subunit. Its function is as follows. One of the proteins that surrounds the polypeptide exit tunnel on the outside of the subunit. This chain is Large ribosomal subunit protein uL24, found in Bacteroides fragilis (strain ATCC 25285 / DSM 2151 / CCUG 4856 / JCM 11019 / LMG 10263 / NCTC 9343 / Onslow / VPI 2553 / EN-2).